The chain runs to 526 residues: Zinc finger protein 69 homolog (526 aa).

Residues 1 to 39 (MPQQLLITLPTEASTWVKLQHPKKAVEGAPLWEDVTKMF) form the SCAN box domain. Positions 76 to 147 (LTFKDISIDF…EKEGPGDPSS (72 aa)) constitute a KRAB domain. 9 consecutive C2H2-type zinc fingers follow at residues 271-293 (YECN…MRIH), 299-321 (FRCK…QRIH), 327-349 (FECE…HRTH), 355-377 (YVCD…LRTH), 383-405 (FTCN…IRIH), 411-433 (YACT…QRIH), 439-461 (YKCK…KTVH), 467-489 (YECN…QRHH), and 495-517 (YECN…HEIH).

It belongs to the krueppel C2H2-type zinc-finger protein family. In terms of tissue distribution, expressed in visceral and subcutaneous adipose tissue.

It is found in the nucleus. Putative transcription factor that appears to regulate lipid metabolism. The protein is Zinc finger protein 69 homolog (ZFP69) of Homo sapiens (Human).